The sequence spans 226 residues: Uracil phosphoribosyltransferase (226 aa).

36–40 serves as a coordination point for GTP; that stretch reads KGLVK. 5-phospho-alpha-D-ribose 1-diphosphate is bound by residues arginine 86, arginine 111, and 145–153; that span reads DPMLATGST. Residues isoleucine 211 and 216–218 each bind uracil; that span reads GDA. Aspartate 217 provides a ligand contact to 5-phospho-alpha-D-ribose 1-diphosphate.

This sequence belongs to the UPRTase family. Requires Mg(2+) as cofactor.

It catalyses the reaction UMP + diphosphate = 5-phospho-alpha-D-ribose 1-diphosphate + uracil. It functions in the pathway pyrimidine metabolism; UMP biosynthesis via salvage pathway; UMP from uracil: step 1/1. Its activity is regulated as follows. Allosterically activated by GTP. Catalyzes the conversion of uracil and 5-phospho-alpha-D-ribose 1-diphosphate (PRPP) to UMP and diphosphate. The protein is Uracil phosphoribosyltransferase of Haloquadratum walsbyi (strain DSM 16790 / HBSQ001).